The following is a 468-amino-acid chain: Purple acid phosphatase 10 (468 aa).

The N-terminal stretch at 1 to 25 is a signal peptide; the sequence is MGRVRKSDFGSIVLVLCCVLNSLLC. N-linked (GlcNAc...) asparagine glycosylation is found at N95 and N113. Residue D167 participates in Fe cation binding. N175 carries an N-linked (GlcNAc...) asparagine glycan. Fe cation contacts are provided by D196 and Y199. D196 lines the Zn(2+) pocket. N233 contributes to the Zn(2+) binding site. N233 is a binding site for substrate. N306 carries N-linked (GlcNAc...) asparagine glycosylation. Zn(2+) is bound at residue H318. H328 serves as the catalytic Proton donor. H355 lines the Zn(2+) pocket. A substrate-binding site is contributed by 355–357; that stretch reads HVH. H357 contributes to the Fe cation binding site. Residue N428 is glycosylated (N-linked (GlcNAc...) asparagine).

This sequence belongs to the metallophosphoesterase superfamily. Purple acid phosphatase family. As to quaternary structure, homodimer; disulfide-linked. The cofactor is Fe cation. Requires Zn(2+) as cofactor. In terms of tissue distribution, expressed in roots, stems, leaves, flowers and siliques.

The protein localises to the secreted. It localises to the cytoplasm. It carries out the reaction a phosphate monoester + H2O = an alcohol + phosphate. In Arabidopsis thaliana (Mouse-ear cress), this protein is Purple acid phosphatase 10 (PAP10).